Reading from the N-terminus, the 62-residue chain is MTIIVQLLVFILVIFSTLLVVGIPVTFASPGQWEKSKNLIYTGAGIWTGLVLITGLVNSFIN.

The next 2 membrane-spanning stretches (helical) occupy residues 8-28 (LVFI…VTFA) and 41-61 (YTGA…NSFI).

It belongs to the PsbZ family. PSII is composed of 1 copy each of membrane proteins PsbA, PsbB, PsbC, PsbD, PsbE, PsbF, PsbH, PsbI, PsbJ, PsbK, PsbL, PsbM, PsbT, sbX, PsbY, PsbZ, Psb30/Ycf12, at least 3 peripheral proteins of the oxygen-evolving complex and a large number of cofactors. It forms dimeric complexes.

It localises to the plastid. The protein localises to the chloroplast thylakoid membrane. Functionally, may control the interaction of photosystem II (PSII) cores with the light-harvesting antenna, regulates electron flow through the 2 photosystem reaction centers. PSII is a light-driven water plastoquinone oxidoreductase, using light energy to abstract electrons from H(2)O, generating a proton gradient subsequently used for ATP formation. This Gracilaria tenuistipitata var. liui (Red alga) protein is Photosystem II reaction center protein Z.